The following is a 1243-amino-acid chain: Membrane-associated phosphatidylinositol transfer protein 1 (1243 aa).

Residues Thr59, Thr282, and Thr287 each carry the phosphothreonine modification. Positions 259–330 (CNTGSEGPEA…HGGGVSPQSL (72 aa)) are disordered. The span at 271–283 (PGKSSTEARPGTS) shows a compositional bias: polar residues. Residues 299-319 (ASPDASFGKQWSSSSRSSYSS) show a composition bias toward low complexity. Residues Ser300, Ser304, Ser319, Ser326, Ser329, Ser342, Ser345, Ser346, and Ser373 each carry the phosphoserine modification. Ser382 bears the Phosphoserine; by CDK1 mark. Residues 581–593 (AGPGSRGSSRRGS) are compositionally biased toward low complexity. The segment at 581–679 (AGPGSRGSSR…PASSEAPDGP (99 aa)) is disordered. 3 positions are modified to phosphoserine: Ser593, Ser600, and Ser621. Residues 643–658 (GSQNSLQVASTATSSG) show a composition bias toward polar residues. Positions 684-878 (RLDFKVSGFF…VVAFILRQVI (195 aa)) constitute a DDHD domain. Ser895 is subject to Phosphoserine. Residues 1206-1243 (LLRSRGPSQVDREGPGTPPTTLARGKTRSISLKLDSEE) are disordered. Arg1210 and Arg1217 each carry omega-N-methylarginine. Ser1236 carries the post-translational modification Phosphoserine.

Belongs to the PtdIns transfer protein family. PI transfer class IIA subfamily. In terms of assembly, interacts with PTK2B via its C-terminus. Interacts with RHOA. Has higher affinity for the inactive, GDP-bound form of RHOA. The CDK1-phosphorylated form interacts with PLK1. Interacts with VAPB and PIK4CA. Phosphorylated on multiple sites by CDK1 at the onset of mitosis. Phosphorylation facilitates dissociation from the Golgi complex and is required for interaction with PLK1. In terms of processing, phosphorylated on threonine residues upon treatment with oleic acid. Post-translationally, phosphorylated on tyrosine residues by PTK2B. As to expression, detected at high levels in brain, and at lower levels in lung, kidney, spleen and liver (at protein level). Ubiquitous. Highly expressed in embryonic retina and the central nervous system.

It localises to the cytoplasm. The protein localises to the golgi apparatus. Its subcellular location is the golgi stack membrane. The protein resides in the endoplasmic reticulum membrane. It is found in the lipid droplet. It localises to the cleavage furrow. The protein localises to the midbody. It carries out the reaction a 1,2-diacyl-sn-glycero-3-phospho-(1D-myo-inositol)(in) = a 1,2-diacyl-sn-glycero-3-phospho-(1D-myo-inositol)(out). Functionally, catalyzes the transfer of phosphatidylinositol (PI) between membranes. Binds PI. Also binds phosphatidylcholine (PC) and phosphatidic acid (PA) with the binding affinity order of PI &gt; PA &gt; PC. Regulates RHOA activity, and plays a role in cytoskeleton remodeling. Necessary for normal completion of cytokinesis. Plays a role in maintaining normal diacylglycerol levels in the Golgi apparatus. Necessary for maintaining the normal structure of the endoplasmic reticulum and the Golgi apparatus. Required for protein export from the endoplasmic reticulum and the Golgi. Binds calcium ions. The protein is Membrane-associated phosphatidylinositol transfer protein 1 (Pitpnm1) of Mus musculus (Mouse).